The sequence spans 290 residues: MFKGAGVAIVTPFKEGKIDFAAFEKLIDFHLENNTQALIVLGTTGEASTQTMEEREALIRLAVQRVEGRIPVIVGTGSNCTDTALQYTRQAEDLGADGILVVTPYYNKCTQKGLIEHFTQIANATKLPVILYNVPSRTGVNILPETVATMSKVENVIGIKEAGGNTAQVLEIKRLVPEDFKIYSGNDDQIIPIYACGGHGVISVASNVIPKEIQEMCAAFMEGNVEKALEIQLLYKKFIDLLFCEVNPIPVKAAVSALGYIENELRLPLTPMEEVNRKKLMDEMKKQNII.

Thr-44 is a pyruvate binding site. The active-site Proton donor/acceptor is the Tyr-132. Catalysis depends on Lys-160, which acts as the Schiff-base intermediate with substrate. Pyruvate is bound at residue Ile-202.

The protein belongs to the DapA family. In terms of assembly, homotetramer; dimer of dimers.

The protein resides in the cytoplasm. It carries out the reaction L-aspartate 4-semialdehyde + pyruvate = (2S,4S)-4-hydroxy-2,3,4,5-tetrahydrodipicolinate + H2O + H(+). The protein operates within amino-acid biosynthesis; L-lysine biosynthesis via DAP pathway; (S)-tetrahydrodipicolinate from L-aspartate: step 3/4. Functionally, catalyzes the condensation of (S)-aspartate-beta-semialdehyde [(S)-ASA] and pyruvate to 4-hydroxy-tetrahydrodipicolinate (HTPA). The polypeptide is 4-hydroxy-tetrahydrodipicolinate synthase (Alkaliphilus oremlandii (strain OhILAs) (Clostridium oremlandii (strain OhILAs))).